The primary structure comprises 381 residues: DNA double-strand break repair protein Mre11 (381 aa).

Residues D9, H11, D50, and D85 each contribute to the Mn(2+) site. Catalysis depends on H86, which acts as the Proton donor. Mn(2+)-binding residues include H156, H187, and H189.

This sequence belongs to the MRE11/RAD32 family. Homodimer. Forms a heterotetramer composed of two Mre11 subunits and two Rad50 subunits. It depends on Mn(2+) as a cofactor.

Nuclease activity is regulated by Rad50. Part of the Rad50/Mre11 complex, which is involved in the early steps of DNA double-strand break (DSB) repair. The complex may facilitate opening of the processed DNA ends to aid in the recruitment of HerA and NurA. Mre11 binds to DSB ends and has both double-stranded 3'-5' exonuclease activity and single-stranded endonuclease activity. This is DNA double-strand break repair protein Mre11 from Saccharolobus solfataricus (strain ATCC 35092 / DSM 1617 / JCM 11322 / P2) (Sulfolobus solfataricus).